A 418-amino-acid chain; its full sequence is Bile acid-CoA:amino acid N-acyltransferase (418 aa).

Ser-125 carries the post-translational modification Phosphoserine. Residues Cys-235, Asp-328, and His-362 each act as charge relay system in the active site. Ser-416 bears the Phosphoserine mark.

Belongs to the C/M/P thioester hydrolase family. As to quaternary structure, monomer. As to expression, expressed in the gallbladder mucosa and pancreas. Expressed in hepatocytes (at protein level).

The protein localises to the cytoplasm. The protein resides in the cytosol. It localises to the peroxisome. The enzyme catalyses choloyl-CoA + glycine = glycocholate + CoA + H(+). It carries out the reaction hexadecanoyl-CoA + H2O = hexadecanoate + CoA + H(+). The catalysed reaction is choloyl-CoA + H2O = cholate + CoA + H(+). It catalyses the reaction chenodeoxycholoyl-CoA + H2O = chenodeoxycholate + CoA + H(+). The enzyme catalyses eicosanoyl-CoA + H2O = eicosanoate + CoA + H(+). It carries out the reaction octadecanoyl-CoA + H2O = octadecanoate + CoA + H(+). The catalysed reaction is docosanoyl-CoA + H2O = docosanoate + CoA + H(+). It catalyses the reaction tetracosanoyl-CoA + H2O = tetracosanoate + CoA + H(+). The enzyme catalyses hexacosanoyl-CoA + H2O = hexacosanoate + CoA + H(+). It carries out the reaction dodecanoyl-CoA + H2O = dodecanoate + CoA + H(+). The catalysed reaction is tetradecanoyl-CoA + H2O = tetradecanoate + CoA + H(+). It catalyses the reaction choloyl-CoA + taurine = taurocholate + CoA + H(+). The enzyme catalyses chenodeoxycholoyl-CoA + glycine = glycochenodeoxycholate + CoA + H(+). It carries out the reaction chenodeoxycholoyl-CoA + taurine = taurochenodeoxycholate + CoA + H(+). The catalysed reaction is eicosanoyl-CoA + glycine = N-eicosanoylglycinate + CoA + H(+). It catalyses the reaction hexacosanoyl-CoA + glycine = N-hexacosanoylglycine + CoA + H(+). The enzyme catalyses docosanoyl-CoA + glycine = N-docosanoylglycine + CoA + H(+). In terms of biological role, catalyzes the amidation of bile acids (BAs) with the amino acids taurine and glycine. More than 95% of the BAs are N-acyl amidates with glycine and taurine. Amidation of BAs in the liver with glycine or taurine prior to their excretion into bile is an important biochemical event in bile acid metabolism. This conjugation (or amidation) plays several important biological roles in that it promotes the secretion of BAs and cholesterol into bile and increases the detergent properties of BAs in the intestine, which facilitates lipid and vitamin absorption. May also act as an acyl-CoA thioesterase that regulates intracellular levels of free fatty acids. In vitro, catalyzes the hydrolysis of long- and very long-chain saturated acyl-CoAs to the free fatty acid and coenzyme A (CoASH), and conjugates glycine to these acyl-CoAs. In Homo sapiens (Human), this protein is Bile acid-CoA:amino acid N-acyltransferase (BAAT).